Consider the following 212-residue polypeptide: 3-demethoxyubiquinol 3-hydroxylase (212 aa).

The segment covering 1-14 (MTSPSSRTPRGSTP) has biased composition (low complexity). The segment at 1–22 (MTSPSSRTPRGSTPPFEPSADE) is disordered. Positions 58, 89, 92, 141, 173, and 176 each coordinate Fe cation.

This sequence belongs to the COQ7 family. It depends on Fe cation as a cofactor.

Its subcellular location is the cell membrane. It carries out the reaction a 5-methoxy-2-methyl-3-(all-trans-polyprenyl)benzene-1,4-diol + AH2 + O2 = a 3-demethylubiquinol + A + H2O. It participates in cofactor biosynthesis; ubiquinone biosynthesis. Catalyzes the hydroxylation of 2-nonaprenyl-3-methyl-6-methoxy-1,4-benzoquinol during ubiquinone biosynthesis. This Rhodospirillum rubrum (strain ATCC 11170 / ATH 1.1.1 / DSM 467 / LMG 4362 / NCIMB 8255 / S1) protein is 3-demethoxyubiquinol 3-hydroxylase.